Consider the following 556-residue polypeptide: MSVSAFNRRWAAVILEALTRHGVQHICIAPGSRSTPLTLAAAENRAFIHHTHFDERGLGHLALGLAKASRQPVAVIVTSGTATANLYPALIEAGLTGEKLILLTADRPPELIDCGANQAIRQPGMFASHPSQTISLPRPSQDIPARWLVSTIDQALGALHAGGVHINCPFAEPLYGDMDETGVEWQQQLGNWWQSDKPWLRQALQLESEKQRDWFFWRQKRGVVVAGRMSAAEGKKVAEWAQTLGWPLIGDVLSQTGQPLQCADLWLGNGKAVSELAQAQIVVQLGSSLTGKRILQWQATCEPDEYWLVDNLPGRLDPAQHRGRRLLASVERWLELHPAEKRQPWATVIPELSRQAWQAAVASNEPFGEAQLAQRIRRYLPEQGQLFVGNSLVVRLIDALAQLPAGYPVYSNRGASGIDGLIATAAGVQRASARPTLAIVGDLSALYDLNSLALLRQASAPLVLIVVNNNGGQIFSMLPTPQDERRQFYLMPQDVDFSHAAAMFGLAYHRPDDWQSLDEALAGAWRRAGATVIELAVNETDGTQTLQQLLAQVSRL.

It belongs to the TPP enzyme family. MenD subfamily. As to quaternary structure, homodimer. Mg(2+) serves as cofactor. It depends on Mn(2+) as a cofactor. Thiamine diphosphate is required as a cofactor.

It carries out the reaction isochorismate + 2-oxoglutarate + H(+) = 5-enolpyruvoyl-6-hydroxy-2-succinyl-cyclohex-3-ene-1-carboxylate + CO2. Its pathway is quinol/quinone metabolism; 1,4-dihydroxy-2-naphthoate biosynthesis; 1,4-dihydroxy-2-naphthoate from chorismate: step 2/7. It functions in the pathway quinol/quinone metabolism; menaquinone biosynthesis. Its function is as follows. Catalyzes the thiamine diphosphate-dependent decarboxylation of 2-oxoglutarate and the subsequent addition of the resulting succinic semialdehyde-thiamine pyrophosphate anion to isochorismate to yield 2-succinyl-5-enolpyruvyl-6-hydroxy-3-cyclohexene-1-carboxylate (SEPHCHC). In Klebsiella pneumoniae (strain 342), this protein is 2-succinyl-5-enolpyruvyl-6-hydroxy-3-cyclohexene-1-carboxylate synthase.